The chain runs to 157 residues: Ribosome maturation factor RimP (157 aa).

It belongs to the RimP family.

The protein localises to the cytoplasm. In terms of biological role, required for maturation of 30S ribosomal subunits. The protein is Ribosome maturation factor RimP of Enterococcus faecalis (strain ATCC 700802 / V583).